A 90-amino-acid polypeptide reads, in one-letter code: Small ribosomal subunit protein bS20 (90 aa).

The segment at 1–25 (MANSAQARKRARQAAKANSHNSALR) is disordered.

It belongs to the bacterial ribosomal protein bS20 family.

Functionally, binds directly to 16S ribosomal RNA. The sequence is that of Small ribosomal subunit protein bS20 from Burkholderia orbicola (strain MC0-3).